We begin with the raw amino-acid sequence, 129 residues long: Small ribosomal subunit protein uS8 (129 aa).

This sequence belongs to the universal ribosomal protein uS8 family. In terms of assembly, part of the 30S ribosomal subunit. Contacts proteins S5 and S12.

In terms of biological role, one of the primary rRNA binding proteins, it binds directly to 16S rRNA central domain where it helps coordinate assembly of the platform of the 30S subunit. The chain is Small ribosomal subunit protein uS8 from Spiroplasma kunkelii.